We begin with the raw amino-acid sequence, 225 residues long: Ferric nitrobindin-like protein (225 aa).

Positions 78 to 84 (GVWRGTG) match the GXWXGXG motif.

This sequence belongs to the nitrobindin family.

This is Ferric nitrobindin-like protein from Corynebacterium diphtheriae (strain ATCC 700971 / NCTC 13129 / Biotype gravis).